We begin with the raw amino-acid sequence, 228 residues long: PKHD-type hydroxylase Vapar_1809 (228 aa).

The Fe2OG dioxygenase domain occupies glutamine 78–serine 179. Fe cation-binding residues include histidine 97, aspartate 99, and histidine 160. 2-oxoglutarate is bound at residue arginine 170.

Fe(2+) is required as a cofactor. It depends on L-ascorbate as a cofactor.

This is PKHD-type hydroxylase Vapar_1809 from Variovorax paradoxus (strain S110).